The chain runs to 922 residues: Up-regulator of cell proliferation (922 aa).

The segment at Met1–Glu20 is disordered. Position 3 is a phosphoserine (Ser3). The VLIG-type G domain maps to Arg680–Arg920.

Belongs to the TRAFAC class dynamin-like GTPase superfamily. Very large inducible GTPase (VLIG) family.

The protein localises to the cytoplasm. It localises to the nucleus. In terms of biological role, may be involved in cell cycle progression through the regulation of cyclin D1 expression. In Bos taurus (Bovine), this protein is Up-regulator of cell proliferation (URGCP).